The chain runs to 399 residues: Cell division protein FtsZ (399 aa).

GTP-binding positions include 18–22, 105–107, Glu136, Arg140, and Asp184; these read GGGVN and GTG. The segment at 311-399 is disordered; sequence GFDGGQPPSK…EELDVPDFLK (89 aa). A compositionally biased stretch (acidic residues) spans 388–399; sequence AAEELDVPDFLK.

This sequence belongs to the FtsZ family. As to quaternary structure, homodimer. Polymerizes to form a dynamic ring structure in a strictly GTP-dependent manner. Interacts directly with several other division proteins.

The protein resides in the cytoplasm. Functionally, essential cell division protein that forms a contractile ring structure (Z ring) at the future cell division site. The regulation of the ring assembly controls the timing and the location of cell division. One of the functions of the FtsZ ring is to recruit other cell division proteins to the septum to produce a new cell wall between the dividing cells. Binds GTP and shows GTPase activity. This is Cell division protein FtsZ from Streptomyces coelicolor (strain ATCC BAA-471 / A3(2) / M145).